Here is a 275-residue protein sequence, read N- to C-terminus: Large ribosomal subunit protein uL2 (275 aa).

The disordered stretch occupies residues Ala-224–Lys-275. Positions Lys-264 to Lys-275 are enriched in basic and acidic residues.

The protein belongs to the universal ribosomal protein uL2 family. In terms of assembly, part of the 50S ribosomal subunit. Forms a bridge to the 30S subunit in the 70S ribosome.

In terms of biological role, one of the primary rRNA binding proteins. Required for association of the 30S and 50S subunits to form the 70S ribosome, for tRNA binding and peptide bond formation. It has been suggested to have peptidyltransferase activity; this is somewhat controversial. Makes several contacts with the 16S rRNA in the 70S ribosome. This Caldanaerobacter subterraneus subsp. tengcongensis (strain DSM 15242 / JCM 11007 / NBRC 100824 / MB4) (Thermoanaerobacter tengcongensis) protein is Large ribosomal subunit protein uL2.